The following is a 920-amino-acid chain: MPLKKLESSNNQTIIAEEVALLKEMLENITRRMIGDDAFTVIESIMVLSEKQDYIELEKVVANISNQEMEVISRYFSILPLLINISEDVDLAYEINHQNNTDTDYLGKLALTIKDLAGKDNGKDILEQVNVVPVLTAHPTQVQRKTILELTTHIHKLLRKYRDAKAGVINLEKWRQELYRYIEMIMQTDIIREKKLQVKNEIKNVMQYYDGSLIQAVTKLTTEYKNLAQKHGLELDNPKPITMGMWIGGDRDGNPFVTAETLCLSATVQSEVILNYYIDKLAALYRTFSLSSTLVQPNSEVERLASLSQDQSIYRGNEPYRRAFHYIQSRLKQTQIQLTNQPAARMSSSVGLNTSAWSSPASLENPILAYDSPVDFKADLKAIEQSLLDNGNSALIEGDLREVMQAVDIFGFFLASIDMRQDSSVQEACVAELLKGANIVDDYSSLSETEKCDVLLQQLMEEPRTLSSAAVAKSDLLEKELAIYTTARELKDKLGEEVIKQHIISHTESVSDMFELAIMLKEVGLVDQQRARVQIVPLFETIEDLDNARDIMAAYLSHDIVKSWIATNRNYQEIMLGYSDSNKDGGYLASGWTLYKAQNELTAIGEEHGVKITFFHGRGGTVGRGGGPSYDAITSQPFGSIKDRIRLTEQGEIIENKYGNKDVAYYHLEMLISASINRMVTQMITDPNEIDSFREIMDSIVADSNTIYRKLVFDNPHFYDYFFEASPIKEVSSLNIGSRPAARKTITEITGLRAIPWVFSWSQNRIMFPGWYGVGSAFKRYIDRAQGNLERLQHMYQTWPFFHSLLSNVDMVLSKSNMNIAFQYAQLAESQDVRDVFYEILDEWQLTKNVILAIQDHDDLLEDNPSLKHSLKSRLPYFNVLNYIQIELIKRWRNNQLDENDEKLIHTTINGIATGLRNSG.

Residues H138 and K583 contribute to the active site.

Belongs to the PEPCase type 1 family. Requires Mg(2+) as cofactor.

The catalysed reaction is oxaloacetate + phosphate = phosphoenolpyruvate + hydrogencarbonate. In terms of biological role, forms oxaloacetate, a four-carbon dicarboxylic acid source for the tricarboxylic acid cycle. This chain is Phosphoenolpyruvate carboxylase, found in Streptococcus pyogenes serotype M3 (strain ATCC BAA-595 / MGAS315).